The sequence spans 487 residues: Lysophospholipid acyltransferase 5 (487 aa).

The residue at position 2 (A2) is an N-acetylalanine. Transmembrane regions (helical) follow at residues 44-64 (LIFSIFLGYPLALFYRHYLFY), 67-87 (SYLIHLFHAFSGLSIAYFNFG), 111-131 (ITAVFTTLCFQMAYLLAGYYY), 178-198 (ILGVPSLLEVAGFSYFYGAFL), 236-256 (LGLVYLVGYTLLSPHITEDYL), and 285-305 (VTCWLVTEGVCILSGLGFNGF). N-linked (GlcNAc...) asparagine glycosylation occurs at N308. Active-site residues include N338 and H374. 3 consecutive transmembrane segments (helical) span residues 364–384 (GLSLLFLALWHGLHSGYLICF), 422–442 (LVQQTIHWLFMGYSMTAFCLF), and 453–473 (SIYFLGHVFFLSLLFTLPYVY). Residues 484 to 487 (KKRE) carry the Di-lysine motif motif.

Belongs to the membrane-bound acyltransferase family.

It is found in the endoplasmic reticulum membrane. The catalysed reaction is a 1-acyl-sn-glycero-3-phosphocholine + an acyl-CoA = a 1,2-diacyl-sn-glycero-3-phosphocholine + CoA. It catalyses the reaction a 1-acyl-sn-glycero-3-phosphoethanolamine + an acyl-CoA = a 1,2-diacyl-sn-glycero-3-phosphoethanolamine + CoA. The enzyme catalyses a 1-acyl-sn-glycero-3-phospho-L-serine + an acyl-CoA = a 1,2-diacyl-sn-glycero-3-phospho-L-serine + CoA. It carries out the reaction (9Z,12Z)-octadecadienoyl-CoA + a 1-acyl-sn-glycero-3-phosphocholine = 1-acyl-2-(9Z,12Z)-octadecadienoyl-sn-glycero-3-phosphocholine + CoA. The catalysed reaction is (5Z,8Z,11Z,14Z)-eicosatetraenoyl-CoA + a 1-acyl-sn-glycero-3-phosphocholine = 1-acyl-2-(5Z,8Z,11Z,14Z-eicosatetraenoyl)-sn-glycero-3-phosphocholine + CoA. It catalyses the reaction dodecanoyl-CoA + 1-hexadecanoyl-sn-glycero-3-phosphocholine = 1-hexadecanoyl-2-dodecanoyl-sn-glycero-3-phosphocholine + CoA. The enzyme catalyses octadecanoyl-CoA + 1-hexadecanoyl-sn-glycero-3-phosphocholine = 1-hexadecanoyl-2-octadecanoyl-sn-glycero-3-phosphocholine + CoA. It carries out the reaction 1-dodecanoyl-sn-glycero-3-phosphocholine + hexadecanoyl-CoA = 1-dodecanoyl-2-hexadecanoyl-sn-glycero-3-phosphocholine + CoA. The catalysed reaction is 1-tetradecanoyl-sn-glycero-3-phosphocholine + hexadecanoyl-CoA = 1-tetradecanoyl-2-hexadecanoyl-sn-glycero-3-phosphocholine + CoA. It catalyses the reaction 1-hexadecanoyl-sn-glycero-3-phosphocholine + hexadecanoyl-CoA = 1,2-dihexadecanoyl-sn-glycero-3-phosphocholine + CoA. The enzyme catalyses 1-octadecanoyl-sn-glycero-3-phosphocholine + hexadecanoyl-CoA = 1-octadecanoyl-2-hexadecanoyl-sn-glycero-3-phosphocholine + CoA. It carries out the reaction 1-(9Z-octadecenoyl)-sn-glycero-3-phosphocholine + hexadecanoyl-CoA = 1-(9Z-octadecenoyl)-2-hexadecanoyl-sn-glycero-3-phosphocholine + CoA. The catalysed reaction is (9Z)-hexadecenoyl-CoA + 1-hexadecanoyl-sn-glycero-3-phosphocholine = 1-hexadecanoyl-2-(9Z-hexadecenoyl)-sn-glycero-3-phosphocholine + CoA. It catalyses the reaction 1-hexadecanoyl-sn-glycero-3-phosphocholine + (9Z)-octadecenoyl-CoA = 1-hexadecanoyl-2-(9Z-octadecenoyl)-sn-glycero-3-phosphocholine + CoA. The enzyme catalyses (9Z,12Z)-octadecadienoyl-CoA + 1-hexadecanoyl-sn-glycero-3-phosphocholine = 1-hexadecanoyl-2-(9Z,12Z-octadecadienoyl)-sn-glycero-3-phosphocholine + CoA. It carries out the reaction 1-dodecanoyl-sn-glycero-3-phosphocholine + (5Z,8Z,11Z,14Z)-eicosatetraenoyl-CoA = 1-dodecanoyl-2-(5Z,8Z,11Z,14Z)-eicosatetraenoyl-sn-glycero-3-phosphocholine + CoA. The catalysed reaction is (5Z,8Z,11Z,14Z)-eicosatetraenoyl-CoA + 1-hexadecanoyl-sn-glycero-3-phosphocholine = 1-hexadecanoyl-2-(5Z,8Z,11Z,14Z-eicosatetraenoyl)-sn-glycero-3-phosphocholine + CoA. It catalyses the reaction 1-octadecanoyl-sn-glycero-3-phosphocholine + (5Z,8Z,11Z,14Z)-eicosatetraenoyl-CoA = 1-octadecanoyl-2-(5Z,8Z,11Z,14Z-eicosatetraenoyl)-sn-glycero-3-phosphocholine + CoA. The enzyme catalyses 1-eicosanoyl-sn-glycero-3-phosphocholine + (5Z,8Z,11Z,14Z)-eicosatetraenoyl-CoA = 1-eicosanoyl-2-(5Z,8Z,11Z,14Z)-eicosatetraenoyl-sn-glycero-3-phosphocholine + CoA. It carries out the reaction 1-(9Z-octadecenoyl)-sn-glycero-3-phosphocholine + (9Z)-octadecenoyl-CoA = 1,2-di-(9Z-octadecenoyl)-sn-glycero-3-phosphocholine + CoA. The catalysed reaction is 1-(9Z-octadecenoyl)-sn-glycero-3-phosphocholine + (9Z,12Z)-octadecadienoyl-CoA = 1-(9Z)-octadecenoyl-2-(9Z,12Z)-octadecadienoyl-sn-glycero-3-phosphocholine + CoA. It catalyses the reaction 1-(9Z-octadecenoyl)-sn-glycero-3-phosphocholine + (5Z,8Z,11Z,14Z)-eicosatetraenoyl-CoA = 1-(9Z)-octadecenoyl-2-(5Z,8Z,11Z,14Z)-icosatetraenoyl-sn-glycero-3-phosphocholine + CoA. The enzyme catalyses a 1-acyl-sn-glycero-3-phosphoethanolamine + (9Z,12Z)-octadecadienoyl-CoA = 1-acyl-2-(9Z,12Z)-octadecadienoyl-sn-glycero-3-phosphoethanolamine + CoA. It carries out the reaction 1-(9Z-octadecenoyl)-sn-glycero-3-phosphoethanolamine + (9Z,12Z)-octadecadienoyl-CoA = 1-(9Z)-octadecenoyl-2-(9Z,12Z)-octadecadienoyl-sn-glycero-3-phosphoethanolamine + CoA. The catalysed reaction is 1-(10Z-heptadecenoyl)-sn-glycero-3-phosphoethanolamine + (9Z,12Z)-octadecadienoyl-CoA = 1-(10Z-heptadecenoyl)-2-(9Z,12Z-octadecadienoyl)-sn-glycero-3-phosphoethanolamine + CoA. It catalyses the reaction a 1-acyl-sn-glycero-3-phosphoethanolamine + (5Z,8Z,11Z,14Z)-eicosatetraenoyl-CoA = 1-acyl-2-(5Z,8Z,11Z,14Z)-eicosatetraenoyl-sn-glycero-3-phosphoethanolamine + CoA. The enzyme catalyses 1-hexadecanoyl-sn-glycero-3-phosphoethanolamine + (5Z,8Z,11Z,14Z)-eicosatetraenoyl-CoA = 1-hexadecanoyl-2-(5Z,8Z,11Z,14Z-eicosatetraenoyl)-sn-glycero-3-phosphoethanolamine + CoA. It carries out the reaction 1-(9Z-octadecenoyl)-sn-glycero-3-phosphoethanolamine + (5Z,8Z,11Z,14Z)-eicosatetraenoyl-CoA = 1-(9Z)-octadecenoyl-2-(5Z,8Z,11Z,14Z)-eicosatetraenoyl-sn-glycero-3-phosphoethanolamine + CoA. The catalysed reaction is 1-(10Z-heptadecenoyl)-sn-glycero-3-phosphoethanolamine + (5Z,8Z,11Z,14Z)-eicosatetraenoyl-CoA = 1-(10Z-heptadecenoyl)-2-(5Z,8Z,11Z,14Z-eicosatetraenoyl)-sn-glycero-3-phosphoethanolamine + CoA. It catalyses the reaction a 1-O-(1Z-alkenyl)-sn-glycero-3-phosphoethanolamine + (5Z,8Z,11Z,14Z)-eicosatetraenoyl-CoA = 1-O-(1Z)-alkenyl-2-(5Z,8Z,11Z,14Z)-eicosatetraenoyl-sn-glycero-3-phosphoethanolamine + CoA. The enzyme catalyses a 1-acyl-sn-glycero-3-phospho-L-serine + (9Z,12Z)-octadecadienoyl-CoA = 1-acyl-2-(9Z,12Z-octadecadienoyl)-sn-glycero-3-phospho-L-serine + CoA. It carries out the reaction a 1-acyl-sn-glycero-3-phospho-L-serine + (5Z,8Z,11Z,14Z)-eicosatetraenoyl-CoA = 1-acyl-2-(5Z,8Z,11Z,14Z-eicosatetraenoyl)-sn-glycero-3-phospho-L-serine + CoA. The catalysed reaction is 1-hexadecanoyl-sn-glycero-3-phospho-L-serine + (9Z)-octadecenoyl-CoA = 1-hexadecanoyl-2-(9Z-octadecenoyl)-sn-glycero-3-phospho-L-serine + CoA. It catalyses the reaction 1-(9Z-octadecenoyl)-sn-glycero-3-phospho-L-serine + (9Z)-octadecenoyl-CoA = 1,2-di-(9Z)-octadecenoyl-sn-glycero-3-phospho-L-serine + CoA. The enzyme catalyses 1-hexadecanoyl-sn-glycero-3-phospho-L-serine + (9Z,12Z)-octadecadienoyl-CoA = 1-hexadecanoyl-2-(9Z,12Z-octadecadienoyl)-sn-glycero-3-phospho-L-serine + CoA. It carries out the reaction 1-(9Z-octadecenoyl)-sn-glycero-3-phospho-L-serine + (9Z,12Z)-octadecadienoyl-CoA = 1-(9Z-octadecenoyl)-2-(9Z,12Z-octadienoyl)-sn-glycero-3-phospho-L-serine + CoA. The catalysed reaction is 1-hexadecanoyl-sn-glycero-3-phospho-L-serine + (5Z,8Z,11Z,14Z)-eicosatetraenoyl-CoA = 1-hexadecanoyl-2-(5Z,8Z,11Z,14Z-eicosatetraenoyl)-sn-glycero-3-phospho-L-serine + CoA. It catalyses the reaction 1-(9Z-octadecenoyl)-sn-glycero-3-phospho-L-serine + (5Z,8Z,11Z,14Z)-eicosatetraenoyl-CoA = 1-(9Z-octadecenoyl)-2-(5Z,8Z,11Z,14Z-eicosatetraenoyl)-sn-glycero-3-phospho-L-serine + CoA. Its pathway is lipid metabolism; phospholipid metabolism. Its function is as follows. Lysophospholipid O-acyltransferase (LPLAT) that catalyzes the reacylation step of the phospholipid remodeling process also known as the Lands cycle. Catalyzes transfer of the fatty acyl chain from fatty acyl-CoA to 1-acyl lysophospholipid to form various classes of phospholipids. Converts 1-acyl lysophosphatidylcholine (LPC) into phosphatidylcholine (PC) (LPCAT activity), 1-acyl lysophosphatidylserine (LPS) into phosphatidylserine (PS) (LPSAT activity) and 1-acyl lysophosphatidylethanolamine (LPE) into phosphatidylethanolamine (PE) (LPEAT activity). Favors polyunsaturated fatty acyl-CoAs as acyl donors compared to saturated fatty acyl-CoAs. Has higher activity for LPC acyl acceptors compared to LPEs and LPSs. Can also transfer the fatty acyl chain from fatty acyl-CoA to 1-O-alkyl lysophospholipid or 1-O-alkenyl lysophospholipid with lower efficiency. Acts as a major LPC O-acyltransferase in liver and intestine. As a component of the liver X receptor/NR1H3 or NR1H2 signaling pathway, mainly catalyzes the incorporation of arachidonate into PCs of endoplasmic reticulum (ER) membranes, increasing membrane dynamics and enabling triacylglycerols transfer to nascent very low-density lipoprotein (VLDL) particles. Promotes processing of sterol regulatory protein SREBF1 in hepatocytes, likely by facilitating the translocation of SREBF1-SCAP complex from ER to the Golgi apparatus. Participates in mechanisms by which the liver X receptor/NR1H3 or NR1H2 signaling pathway counteracts lipid-induced ER stress response and inflammation. Down-regulates hepatic inflammation by limiting arachidonic acid availability for synthesis of inflammatory eicosanoids, such as prostaglandins. In enterocytes, acts as a component of a gut-brain feedback loop that coordinates dietary lipid absorption and food intake. Regulates the abundance of PCs containing linoleate and arachidonate in enterocyte membranes, enabling passive diffusion of fatty acids and cholesterol across the membrane for efficient chylomicron assembly. In the intestinal crypt, acts as a component of dietary-responsive phospholipid-cholesterol axis, regulating the biosynthesis of cholesterol and its mitogenic effects on intestinal stem cells. This is Lysophospholipid acyltransferase 5 (Lpcat3) from Rattus norvegicus (Rat).